An 83-amino-acid chain; its full sequence is Small ribosomal subunit protein bS18A (83 aa).

The protein belongs to the bacterial ribosomal protein bS18 family. As to quaternary structure, part of the 30S ribosomal subunit. Forms a tight heterodimer with protein bS6.

Functionally, binds as a heterodimer with protein bS6 to the central domain of the 16S rRNA, where it helps stabilize the platform of the 30S subunit. The polypeptide is Small ribosomal subunit protein bS18A (Nocardia farcinica (strain IFM 10152)).